The sequence spans 220 residues: Large ribosomal subunit protein uL1 (220 aa).

This sequence belongs to the universal ribosomal protein uL1 family. As to quaternary structure, part of the 50S ribosomal subunit.

Binds directly to 23S rRNA. The L1 stalk is quite mobile in the ribosome, and is involved in E site tRNA release. Its function is as follows. Protein L1 is also a translational repressor protein, it controls the translation of the L11 operon by binding to its mRNA. The protein is Large ribosomal subunit protein uL1 of Ehrlichia chaffeensis (strain ATCC CRL-10679 / Arkansas).